A 136-amino-acid chain; its full sequence is Small ribosomal subunit protein uS19 (136 aa).

It belongs to the universal ribosomal protein uS19 family.

Protein S19 forms a complex with S13 that binds strongly to the 16S ribosomal RNA. The sequence is that of Small ribosomal subunit protein uS19 from Methanothrix thermoacetophila (strain DSM 6194 / JCM 14653 / NBRC 101360 / PT) (Methanosaeta thermophila).